The following is a 66-amino-acid chain: Probable cytochrome b-c1 complex subunit 9 (66 aa).

At 1-20 the chain is on the mitochondrial matrix side; sequence MSNALTNIFYKYVARRNSTW. A helical membrane pass occupies residues 21 to 46; the sequence is MAGAILGAFVLDSTVSGAVNTFFDSV. Over 47-66 the chain is Mitochondrial intermembrane; the sequence is NKGKLWKDVYAERVKKGISQ.

It belongs to the UQCR10/QCR9 family. As to quaternary structure, component of the ubiquinol-cytochrome c oxidoreductase (cytochrome b-c1 complex, complex III, CIII), a multisubunit enzyme composed of 3 respiratory subunits cytochrome b, cytochrome c1 and Rieske protein, 2 core protein subunits, and additional low-molecular weight protein subunits. The complex exists as an obligatory dimer and forms supercomplexes (SCs) in the inner mitochondrial membrane with cytochrome c oxidase (complex IV, CIV).

It localises to the mitochondrion inner membrane. Component of the ubiquinol-cytochrome c oxidoreductase, a multisubunit transmembrane complex that is part of the mitochondrial electron transport chain which drives oxidative phosphorylation. The respiratory chain contains 3 multisubunit complexes succinate dehydrogenase (complex II, CII), ubiquinol-cytochrome c oxidoreductase (cytochrome b-c1 complex, complex III, CIII) and cytochrome c oxidase (complex IV, CIV), that cooperate to transfer electrons derived from NADH and succinate to molecular oxygen, creating an electrochemical gradient over the inner membrane that drives transmembrane transport and the ATP synthase. The cytochrome b-c1 complex catalyzes electron transfer from ubiquinol to cytochrome c, linking this redox reaction to translocation of protons across the mitochondrial inner membrane, with protons being carried across the membrane as hydrogens on the quinol. In the process called Q cycle, 2 protons are consumed from the matrix, 4 protons are released into the intermembrane space and 2 electrons are passed to cytochrome c. This Dictyostelium discoideum (Social amoeba) protein is Probable cytochrome b-c1 complex subunit 9.